Consider the following 228-residue polypeptide: MYSIVAEESGLLPRERLLQKGAEVLSDQELLAIVLRTGTRSESVLSMANRILKGMTSLADLSRLSLNELQEIPGIGRVKSIELKAMVELAKRIEKAELARSEQIMSSQQVARRMMLDIGDKPQEHLVAIYLDTQNRIIQQKTVFIGGVRRSIAEPREILYYACHLMATSLIVVHNHPSGEAYPSRNDIDFTQKIKRSCDDLGICLLDHLIVGKSTYYSFREEREDFEL.

Residues 103 to 225 (QIMSSQQVAR…YYSFREERED (123 aa)) enclose the MPN domain. Zn(2+)-binding residues include histidine 174, histidine 176, and aspartate 187. A JAMM motif motif is present at residues 174-187 (HNHPSGEAYPSRND).

The protein belongs to the UPF0758 family.

The sequence is that of UPF0758 protein stu1465 from Streptococcus thermophilus (strain ATCC BAA-250 / LMG 18311).